Here is a 173-residue protein sequence, read N- to C-terminus: Crossover junction endodeoxyribonuclease RuvC (173 aa).

Catalysis depends on residues Asp-8, Glu-69, and Asp-141. Positions 8, 69, and 141 each coordinate Mg(2+).

This sequence belongs to the RuvC family. In terms of assembly, homodimer which binds Holliday junction (HJ) DNA. The HJ becomes 2-fold symmetrical on binding to RuvC with unstacked arms; it has a different conformation from HJ DNA in complex with RuvA. In the full resolvosome a probable DNA-RuvA(4)-RuvB(12)-RuvC(2) complex forms which resolves the HJ. Mg(2+) is required as a cofactor.

The protein localises to the cytoplasm. It catalyses the reaction Endonucleolytic cleavage at a junction such as a reciprocal single-stranded crossover between two homologous DNA duplexes (Holliday junction).. The RuvA-RuvB-RuvC complex processes Holliday junction (HJ) DNA during genetic recombination and DNA repair. Endonuclease that resolves HJ intermediates. Cleaves cruciform DNA by making single-stranded nicks across the HJ at symmetrical positions within the homologous arms, yielding a 5'-phosphate and a 3'-hydroxyl group; requires a central core of homology in the junction. The consensus cleavage sequence is 5'-(A/T)TT(C/G)-3'. Cleavage occurs on the 3'-side of the TT dinucleotide at the point of strand exchange. HJ branch migration catalyzed by RuvA-RuvB allows RuvC to scan DNA until it finds its consensus sequence, where it cleaves and resolves the cruciform DNA. This Stenotrophomonas maltophilia (strain K279a) protein is Crossover junction endodeoxyribonuclease RuvC.